The sequence spans 229 residues: Cytidylate kinase (229 aa).

Residue 12–20 coordinates ATP; sequence GPSGSGKGT.

The protein belongs to the cytidylate kinase family. Type 1 subfamily.

The protein resides in the cytoplasm. The enzyme catalyses CMP + ATP = CDP + ADP. The catalysed reaction is dCMP + ATP = dCDP + ADP. This is Cytidylate kinase from Pseudomonas fluorescens (strain ATCC BAA-477 / NRRL B-23932 / Pf-5).